We begin with the raw amino-acid sequence, 146 residues long: Large ribosomal subunit protein uL15 (146 aa).

A disordered region spans residues 1-46; the sequence is MKLHELQPAPGSRKKAVRVGRGIGSGNGKTAGRGHKGQKARSGGGV. Residues 21 to 31 are compositionally biased toward gly residues; the sequence is RGIGSGNGKTA.

The protein belongs to the universal ribosomal protein uL15 family. As to quaternary structure, part of the 50S ribosomal subunit.

Functionally, binds to the 23S rRNA. In Geobacillus thermodenitrificans (strain NG80-2), this protein is Large ribosomal subunit protein uL15.